Here is a 427-residue protein sequence, read N- to C-terminus: Cyclic 2,3-diphosphoglycerate synthetase (427 aa).

It belongs to the cyclic 2,3-diphosphoglycerate synthetase family.

It localises to the cytoplasm. It carries out the reaction (2R)-2,3-bisphosphoglycerate + ATP + H(+) = cyclic (2R)-2,3-bisphosphoglycerate + ADP + phosphate. Functionally, catalyzes the formation of cyclic 2,3-diphosphoglycerate (cDPG) by formation of an intramolecular phosphoanhydride bond at the expense of ATP. The polypeptide is Cyclic 2,3-diphosphoglycerate synthetase (Pyrococcus abyssi (strain GE5 / Orsay)).